The following is a 471-amino-acid chain: MSAGKIVQVIGPVVDVEFPLNDELPDINTALNIKKDDGSVLVTEVALELGDGVMRTIAMDGTDGLRRGLEVENTGASISVPVGDDTLGRVFNVLGDPIDGGAEFGPDAERMPIHRDAPKYDELNPTTEILETGIKVIDLLEPYVRGGKIGLFGGAGVGKTVLIQELIHNIAQGHNGISVFTGVGERTREGNDMYWEMKGSGVLKQTAMVYGQMNEPPGARMRVALTGLTIAEYFRDVKGQDVLLFIDNIFRFTQAGSEVSALLGRIPSAVGYQPTLATEMGQLQERITSTKKGSITSIQAVYVPADDYTDPAPATTFAHLDATTNLERALTQQGIYPAVDPLASTSTALAPEIIGQEHYDVATEVQRVLQRYHELQDIISILGMDELSDEEQTIVQRARRIQFFLSQPFSVASQFTGMDGKYVKLEDTIRSFKGILDGKYDDLPEDAFRNCGAIEDAVEKAKQMNDAVANN.

153–160 (GGAGVGKT) is an ATP binding site.

Belongs to the ATPase alpha/beta chains family. In terms of assembly, F-type ATPases have 2 components, CF(1) - the catalytic core - and CF(0) - the membrane proton channel. CF(1) has five subunits: alpha(3), beta(3), gamma(1), delta(1), epsilon(1). CF(0) has three main subunits: a(1), b(2) and c(9-12). The alpha and beta chains form an alternating ring which encloses part of the gamma chain. CF(1) is attached to CF(0) by a central stalk formed by the gamma and epsilon chains, while a peripheral stalk is formed by the delta and b chains.

The protein localises to the cell membrane. It carries out the reaction ATP + H2O + 4 H(+)(in) = ADP + phosphate + 5 H(+)(out). Its function is as follows. Produces ATP from ADP in the presence of a proton gradient across the membrane. The catalytic sites are hosted primarily by the beta subunits. The chain is ATP synthase subunit beta from Levilactobacillus brevis (strain ATCC 367 / BCRC 12310 / CIP 105137 / JCM 1170 / LMG 11437 / NCIMB 947 / NCTC 947) (Lactobacillus brevis).